The chain runs to 228 residues: Ran-binding protein 1 homolog a (228 aa).

Over residues 1–13 the composition is skewed to basic and acidic residues; that stretch reads MATNEPEHEHRDE. Disordered stretches follow at residues 1–30 and 159–228; these read MATNEPEHEHRDEEEAGANEDEDTGAQVAP and SEEE…GPST. Residues 14-24 show a composition bias toward acidic residues; it reads EEAGANEDEDT. Residues 27–162 enclose the RanBD1 domain; it reads QVAPIVRLEE…FKEVAESEEE (136 aa). Positions 179-228 are enriched in basic and acidic residues; that stretch reads LTVEETKTEEKTEAKAVETAKTEVKAEEKKESEAEKSGEAKKTEESGPST.

Interacts with the GTP-bound form of RAN1, RAN2 and RAN3. Ubiquitous. Preferentially expressed in root tips and gynoecium.

Its subcellular location is the nucleus. It is found in the nuclear pore complex. The polypeptide is Ran-binding protein 1 homolog a (RANBP1A) (Arabidopsis thaliana (Mouse-ear cress)).